Here is a 247-residue protein sequence, read N- to C-terminus: 14-3-3 protein gamma-A (247 aa).

The protein belongs to the 14-3-3 family. As to quaternary structure, homodimer, and heterodimer with other family members.

It is found in the cytoplasm. In terms of biological role, adapter protein implicated in the regulation of a large spectrum of both general and specialized signaling pathways. Binds to a large number of partners, usually by recognition of a phosphoserine or phosphothreonine motif. Binding generally results in the modulation of the activity of the binding partner. This Xenopus laevis (African clawed frog) protein is 14-3-3 protein gamma-A (ywhag-a).